The sequence spans 541 residues: Chaperonin GroEL (541 aa).

ATP contacts are provided by residues T29–P32, D86–T90, G413, N478–A480, and D494.

This sequence belongs to the chaperonin (HSP60) family. In terms of assembly, forms a cylinder of 14 subunits composed of two heptameric rings stacked back-to-back. Interacts with the co-chaperonin GroES.

Its subcellular location is the cytoplasm. It catalyses the reaction ATP + H2O + a folded polypeptide = ADP + phosphate + an unfolded polypeptide.. Its function is as follows. Together with its co-chaperonin GroES, plays an essential role in assisting protein folding. The GroEL-GroES system forms a nano-cage that allows encapsulation of the non-native substrate proteins and provides a physical environment optimized to promote and accelerate protein folding. The polypeptide is Chaperonin GroEL (Agathobacter rectalis (strain ATCC 33656 / DSM 3377 / JCM 17463 / KCTC 5835 / VPI 0990) (Eubacterium rectale)).